The following is a 212-amino-acid chain: Large ribosomal subunit protein uL4 (212 aa).

This sequence belongs to the universal ribosomal protein uL4 family. As to quaternary structure, part of the 50S ribosomal subunit.

One of the primary rRNA binding proteins, this protein initially binds near the 5'-end of the 23S rRNA. It is important during the early stages of 50S assembly. It makes multiple contacts with different domains of the 23S rRNA in the assembled 50S subunit and ribosome. In terms of biological role, forms part of the polypeptide exit tunnel. This chain is Large ribosomal subunit protein uL4, found in Phenylobacterium zucineum (strain HLK1).